The chain runs to 499 residues: UTP--glucose-1-phosphate uridylyltransferase (499 aa).

The residue at position 2 (S2) is an N-acetylserine. S17 carries the phosphoserine modification. Position 19 is a phosphothreonine (T19). Phosphoserine is present on residues S21 and S79. UTP-binding positions include 109 to 112, K123, Q186, and G215; that span reads LNGG. 111 to 112 lines the substrate pocket; sequence GG. K123 is a binding site for Mg(2+). Substrate contacts are provided by residues H216 and 244–246; that span reads NGD. D246 serves as a coordination point for UTP. D246 is a Mg(2+) binding site. R369 bears the Omega-N-methylarginine mark. K388 contributes to the UTP binding site. Residue K388 is part of the active site. The tract at residues 448-499 is oligomerization; it reads HLTITGNVFLGKDVTLRGTVIIVCSDGHKIDIPNGSILENVVVTGNLQILEH.

It belongs to the UDPGP type 1 family. As to quaternary structure, homooctamer.

The enzyme catalyses alpha-D-glucose 1-phosphate + UTP + H(+) = UDP-alpha-D-glucose + diphosphate. Plays a central role as a glucosyl donor in cellular metabolic pathways. The polypeptide is UTP--glucose-1-phosphate uridylyltransferase (Saccharomyces cerevisiae (strain ATCC 204508 / S288c) (Baker's yeast)).